A 309-amino-acid chain; its full sequence is Protein FdhE homolog (309 aa).

Belongs to the FdhE family.

The protein localises to the cytoplasm. In terms of biological role, necessary for formate dehydrogenase activity. This is Protein FdhE homolog from Pasteurella multocida (strain Pm70).